Here is a 186-residue protein sequence, read N- to C-terminus: Ion-translocating oxidoreductase complex subunit B (186 aa).

The hydrophobic stretch occupies residues 1-23 (MLTPILALTALALIAGALLGFAA). One can recognise a 4Fe-4S domain in the interval 29–88 (EGNPIADQVDAVLPQTQCGQCGFGGCRPYAEAIAAGEAEINRCPPGGQDTVQTLADLLGV). [4Fe-4S] cluster contacts are provided by cysteine 46, cysteine 49, cysteine 54, cysteine 71, cysteine 114, cysteine 117, cysteine 120, cysteine 124, cysteine 144, cysteine 147, cysteine 150, and cysteine 154. 4Fe-4S ferredoxin-type domains are found at residues 105 to 134 (QVAW…GAAK) and 135 to 164 (QMHT…MVPV).

This sequence belongs to the 4Fe4S bacterial-type ferredoxin family. RnfB subfamily. In terms of assembly, the complex is composed of six subunits: RnfA, RnfB, RnfC, RnfD, RnfE and RnfG. It depends on [4Fe-4S] cluster as a cofactor.

It is found in the cell inner membrane. Part of a membrane-bound complex that couples electron transfer with translocation of ions across the membrane. The polypeptide is Ion-translocating oxidoreductase complex subunit B (Alkalilimnicola ehrlichii (strain ATCC BAA-1101 / DSM 17681 / MLHE-1)).